The sequence spans 631 residues: tRNA uridine 5-carboxymethylaminomethyl modification enzyme MnmG (631 aa).

FAD is bound at residue 15 to 20 (GAGHAG). Residues 214-233 (YSKTEEEPGDKEPRHFSFTS) form a disordered region. 276–290 (GPRYCPSIETKVVRF) is a binding site for NAD(+).

Belongs to the MnmG family. Homodimer. Heterotetramer of two MnmE and two MnmG subunits. It depends on FAD as a cofactor.

Its subcellular location is the cytoplasm. NAD-binding protein involved in the addition of a carboxymethylaminomethyl (cmnm) group at the wobble position (U34) of certain tRNAs, forming tRNA-cmnm(5)s(2)U34. This Lactobacillus delbrueckii subsp. bulgaricus (strain ATCC 11842 / DSM 20081 / BCRC 10696 / JCM 1002 / NBRC 13953 / NCIMB 11778 / NCTC 12712 / WDCM 00102 / Lb 14) protein is tRNA uridine 5-carboxymethylaminomethyl modification enzyme MnmG.